The primary structure comprises 331 residues: MSTENTTRQAETGAAYDATAKQKAQAKTARIPIKVVPAETLKKPDWIRVKAGSPTTRFYEIKNILREHQLHTVCEEASCPNIGECFGKGTATFMIMGDKCTRRCPFCDVGHGRPDPLDVNEPANLAKTIAALKLKYVVITSVDRDDLRDGGAGHYVECIRQTRAASPETRIEVLVPDFRGRMDRALEILKTAPPDVMNHNMETVPRLYKEARPGADYQFSLTLLKRFKEEVPGVPTKSGLMVGLGETDDEILDVMRDMRAHDIDMLTIGQYLAPSGHHLPVRRYVHPDTFRMFETEAYKMGFTHAAVGAMVRSSYHADQQAHQAGVDGAIG.

[4Fe-4S] cluster-binding residues include C74, C79, C85, C100, C104, C107, and S314. One can recognise a Radical SAM core domain in the interval 85-303 (CFGKGTATFM…ETEAYKMGFT (219 aa)).

Belongs to the radical SAM superfamily. Lipoyl synthase family. [4Fe-4S] cluster serves as cofactor.

It localises to the cytoplasm. The catalysed reaction is [[Fe-S] cluster scaffold protein carrying a second [4Fe-4S](2+) cluster] + N(6)-octanoyl-L-lysyl-[protein] + 2 oxidized [2Fe-2S]-[ferredoxin] + 2 S-adenosyl-L-methionine + 4 H(+) = [[Fe-S] cluster scaffold protein] + N(6)-[(R)-dihydrolipoyl]-L-lysyl-[protein] + 4 Fe(3+) + 2 hydrogen sulfide + 2 5'-deoxyadenosine + 2 L-methionine + 2 reduced [2Fe-2S]-[ferredoxin]. Its pathway is protein modification; protein lipoylation via endogenous pathway; protein N(6)-(lipoyl)lysine from octanoyl-[acyl-carrier-protein]: step 2/2. Functionally, catalyzes the radical-mediated insertion of two sulfur atoms into the C-6 and C-8 positions of the octanoyl moiety bound to the lipoyl domains of lipoate-dependent enzymes, thereby converting the octanoylated domains into lipoylated derivatives. The polypeptide is Lipoyl synthase (Leptothrix cholodnii (strain ATCC 51168 / LMG 8142 / SP-6) (Leptothrix discophora (strain SP-6))).